We begin with the raw amino-acid sequence, 50 residues long: Protein hunchback (50 aa).

3 C2H2-type zinc fingers span residues 1–5, 11–33, and 39–50; these read HILKH, IRCP…MKSH, and YRCLDCNYATKY.

Belongs to the hunchback C2H2-type zinc-finger protein family.

It localises to the nucleus. Gap class segmentation protein that controls development of head structures. The sequence is that of Protein hunchback (hb) from Bradysia coprophila (Dark-winged fungus gnat).